A 753-amino-acid chain; its full sequence is Neuroendocrine convertase 1 (753 aa).

The signal sequence occupies residues 1 to 27; sequence MEQRGWTLQCTAFAFFCVWCALNSVKA. Positions 28–110 are excised as a propeptide; that stretch reads KRQFVNEWAA…QQYEKERSKR (83 aa). In terms of domain architecture, Peptidase S8 spans 129–450; it reads QWYLQDTRMT…FGLLNAKALV (322 aa). Active-site charge relay system residues include Asp-167 and His-208. 2 disulfides stabilise this stretch: Cys-225–Cys-374 and Cys-317–Cys-347. Ser-382 serves as the catalytic Charge relay system. Asn-401 carries an N-linked (GlcNAc...) asparagine glycan. The region spanning 460-597 is the P/Homo B domain; that stretch reads NVPEKKECVV…KLILHGTSSQ (138 aa). A disulfide bridge links Cys-467 with Cys-494. The span at 633-651 shows a compositional bias: polar residues; the sequence is QKSLNGNLLVPKNSSSSNV. The tract at residues 633–663 is disordered; the sequence is QKSLNGNLLVPKNSSSSNVEGRRDEQVQGTP. Asn-645 carries N-linked (GlcNAc...) asparagine glycosylation.

The protein belongs to the peptidase S8 family. Furin subfamily. Requires Ca(2+) as cofactor.

Its subcellular location is the cytoplasmic vesicle. The protein resides in the secretory vesicle. The enzyme catalyses Release of protein hormones, neuropeptides and renin from their precursors, generally by hydrolysis of -Lys-Arg-|- bonds.. In terms of biological role, involved in the processing of hormone and other protein precursors at sites comprised of pairs of basic amino acid residues. Substrates include POMC, renin, enkephalin, dynorphin, somatostatin, insulin and AGRP. This Mus musculus (Mouse) protein is Neuroendocrine convertase 1 (Pcsk1).